Consider the following 1342-residue polypeptide: DNA-directed RNA polymerase subunit beta (1342 aa).

Belongs to the RNA polymerase beta chain family. As to quaternary structure, the RNAP catalytic core consists of 2 alpha, 1 beta, 1 beta' and 1 omega subunit. When a sigma factor is associated with the core the holoenzyme is formed, which can initiate transcription.

It carries out the reaction RNA(n) + a ribonucleoside 5'-triphosphate = RNA(n+1) + diphosphate. Functionally, DNA-dependent RNA polymerase catalyzes the transcription of DNA into RNA using the four ribonucleoside triphosphates as substrates. This chain is DNA-directed RNA polymerase subunit beta, found in Shewanella amazonensis (strain ATCC BAA-1098 / SB2B).